The following is a 365-amino-acid chain: GTPase Obg (365 aa).

An Obg domain is found at 1–159 (MKFIDEARIE…RMLKLELKVL (159 aa)). Residues 160-334 (ADVGLLGMPN…LIYAIKDHLQ (175 aa)) form the OBG-type G domain. GTP-binding positions include 166–173 (GMPNAGKS), 191–195 (FTTLH), 213–216 (DIPG), 284–287 (NKLD), and 315–317 (SAL). 2 residues coordinate Mg(2+): Ser173 and Thr193.

Belongs to the TRAFAC class OBG-HflX-like GTPase superfamily. OBG GTPase family. Monomer. It depends on Mg(2+) as a cofactor.

It is found in the cytoplasm. Functionally, an essential GTPase which binds GTP, GDP and possibly (p)ppGpp with moderate affinity, with high nucleotide exchange rates and a fairly low GTP hydrolysis rate. Plays a role in control of the cell cycle, stress response, ribosome biogenesis and in those bacteria that undergo differentiation, in morphogenesis control. The protein is GTPase Obg of Cupriavidus taiwanensis (strain DSM 17343 / BCRC 17206 / CCUG 44338 / CIP 107171 / LMG 19424 / R1) (Ralstonia taiwanensis (strain LMG 19424)).